Reading from the N-terminus, the 245-residue chain is 1-(5-phosphoribosyl)-5-[(5-phosphoribosylamino)methylideneamino] imidazole-4-carboxamide isomerase (245 aa).

Residue aspartate 7 is the Proton acceptor of the active site. The Proton donor role is filled by aspartate 129.

Belongs to the HisA/HisF family.

The protein resides in the cytoplasm. It carries out the reaction 1-(5-phospho-beta-D-ribosyl)-5-[(5-phospho-beta-D-ribosylamino)methylideneamino]imidazole-4-carboxamide = 5-[(5-phospho-1-deoxy-D-ribulos-1-ylimino)methylamino]-1-(5-phospho-beta-D-ribosyl)imidazole-4-carboxamide. It functions in the pathway amino-acid biosynthesis; L-histidine biosynthesis; L-histidine from 5-phospho-alpha-D-ribose 1-diphosphate: step 4/9. The chain is 1-(5-phosphoribosyl)-5-[(5-phosphoribosylamino)methylideneamino] imidazole-4-carboxamide isomerase from Shewanella baltica (strain OS195).